The chain runs to 107 residues: MIPGEMLVEPGDIELNVGRATATVKVANSGDRPIQVGSHFHFYETNPALKFDRAIGYGMRLNITAGTAVRFEPGQERTVELVALAGDRKVYGFNGKVMGALDKKEGK.

The protein belongs to the urease beta subunit family. As to quaternary structure, heterotrimer of UreA (gamma), UreB (beta) and UreC (alpha) subunits. Three heterotrimers associate to form the active enzyme.

It is found in the cytoplasm. The catalysed reaction is urea + 2 H2O + H(+) = hydrogencarbonate + 2 NH4(+). It functions in the pathway nitrogen metabolism; urea degradation; CO(2) and NH(3) from urea (urease route): step 1/1. This is Urease subunit beta from Janthinobacterium sp. (strain Marseille) (Minibacterium massiliensis).